The sequence spans 259 residues: Ferritin-3, chloroplastic (259 aa).

The transit peptide at 1 to 49 (MLLKAASTFSLLNIHGEKKDISPLFSSSSSISSPVSSGKSGNLSFPLRA) directs the protein to the chloroplast. Residues 50–88 (SKSSTTTTSTLSGVVFEPFEEVKKEMDLVPSGQQLSLAR) are extension peptide (EP). Residues 89–242 (HLYSPECEAA…EYVSQLRRLG (154 aa)) form the Ferritin-like diiron domain. Positions 106, 141, 144, 190, and 224 each coordinate Fe cation.

Belongs to the ferritin family. As to quaternary structure, oligomer of 24 subunits. There are two types of subunits: L (light) chain and H (heavy) chain. The major chain can be light or heavy, depending on the species and tissue type. The functional molecule forms a roughly spherical shell with a diameter of 12 nm and contains a central cavity into which the insoluble mineral iron core is deposited.

It is found in the plastid. The protein resides in the chloroplast. The catalysed reaction is 4 Fe(2+) + O2 + 4 H(+) = 4 Fe(3+) + 2 H2O. In terms of biological role, stores iron in a soluble, non-toxic, readily available form. Important for iron homeostasis. Has ferroxidase activity. Iron is taken up in the ferrous form and deposited as ferric hydroxides after oxidation. This is Ferritin-3, chloroplastic (FER3) from Arabidopsis thaliana (Mouse-ear cress).